A 126-amino-acid chain; its full sequence is Aspartate 1-decarboxylase (126 aa).

Catalysis depends on serine 25, which acts as the Schiff-base intermediate with substrate; via pyruvic acid. Position 25 is a pyruvic acid (Ser) (serine 25). Residue threonine 57 participates in substrate binding. Tyrosine 58 (proton donor) is an active-site residue. 73 to 75 (GAA) is a binding site for substrate.

Belongs to the PanD family. As to quaternary structure, heterooctamer of four alpha and four beta subunits. Pyruvate serves as cofactor. Is synthesized initially as an inactive proenzyme, which is activated by self-cleavage at a specific serine bond to produce a beta-subunit with a hydroxyl group at its C-terminus and an alpha-subunit with a pyruvoyl group at its N-terminus.

Its subcellular location is the cytoplasm. It carries out the reaction L-aspartate + H(+) = beta-alanine + CO2. Its pathway is cofactor biosynthesis; (R)-pantothenate biosynthesis; beta-alanine from L-aspartate: step 1/1. Functionally, catalyzes the pyruvoyl-dependent decarboxylation of aspartate to produce beta-alanine. The sequence is that of Aspartate 1-decarboxylase from Photorhabdus laumondii subsp. laumondii (strain DSM 15139 / CIP 105565 / TT01) (Photorhabdus luminescens subsp. laumondii).